The sequence spans 392 residues: Zinc finger protein CONSTANS-LIKE 7 (392 aa).

Residues Cys22, Cys25, Cys46, and His51 each coordinate Zn(2+). A B box-type; atypical zinc finger spans residues 22 to 65 (CDACMKRSRASWYCPADDAFLCQSCDASIHSANHLAKRHERVRL). The stretch at 226–254 (KEENKVGFEINCKDLKRVKDEDEEEEEAK) forms a coiled coil. Disordered regions lie at residues 246–271 (EDEEEEEAKCENGGSKDSDREASNDK) and 326–346 (SDGSVTRQQGRDGGGSDGERE). Residues 259–271 (GSKDSDREASNDK) are compositionally biased toward basic and acidic residues. The CCT domain occupies 345 to 387 (REARVLRYKEKRRTRLFSKKIRYEVRKLNAEQRPRIKGRFVKR).

Belongs to the CONSTANS family.

Its subcellular location is the nucleus. The protein is Zinc finger protein CONSTANS-LIKE 7 (COL7) of Arabidopsis thaliana (Mouse-ear cress).